The chain runs to 60 residues: UPF0434 protein Ssed_2824 (60 aa).

It belongs to the UPF0434 family.

The protein is UPF0434 protein Ssed_2824 of Shewanella sediminis (strain HAW-EB3).